The chain runs to 384 residues: Probable protein phosphatase 2C 42 (384 aa).

The region spanning 58-358 is the PPM-type phosphatase domain; sequence DFSMAVIQAN…DDITVIVVFL (301 aa). Residues aspartate 89, glycine 90, aspartate 290, and aspartate 349 each contribute to the Mn(2+) site.

This sequence belongs to the PP2C family. It depends on Mg(2+) as a cofactor. Mn(2+) is required as a cofactor.

The catalysed reaction is O-phospho-L-seryl-[protein] + H2O = L-seryl-[protein] + phosphate. It carries out the reaction O-phospho-L-threonyl-[protein] + H2O = L-threonyl-[protein] + phosphate. Functionally, dephosphorylates and represses plasma membrane H(+)-ATPases (PM H(+)-ATPases, e.g. AHA1 and AHA2), thus influencing negatively plant growth and fitness. Promotes the apical hook maintenance of etiolated seedlings. This is Probable protein phosphatase 2C 42 from Arabidopsis thaliana (Mouse-ear cress).